The following is a 218-amino-acid chain: Imidazole glycerol phosphate synthase subunit HisH (218 aa).

In terms of domain architecture, Glutamine amidotransferase type-1 spans 7 to 211 (STVIIDTGCA…LALDKASLDA (205 aa)). The Nucleophile role is filled by Cys82. Residues His186 and Glu188 contribute to the active site.

Heterodimer of HisH and HisF.

It localises to the cytoplasm. The catalysed reaction is 5-[(5-phospho-1-deoxy-D-ribulos-1-ylimino)methylamino]-1-(5-phospho-beta-D-ribosyl)imidazole-4-carboxamide + L-glutamine = D-erythro-1-(imidazol-4-yl)glycerol 3-phosphate + 5-amino-1-(5-phospho-beta-D-ribosyl)imidazole-4-carboxamide + L-glutamate + H(+). The enzyme catalyses L-glutamine + H2O = L-glutamate + NH4(+). It participates in amino-acid biosynthesis; L-histidine biosynthesis; L-histidine from 5-phospho-alpha-D-ribose 1-diphosphate: step 5/9. In terms of biological role, IGPS catalyzes the conversion of PRFAR and glutamine to IGP, AICAR and glutamate. The HisH subunit catalyzes the hydrolysis of glutamine to glutamate and ammonia as part of the synthesis of IGP and AICAR. The resulting ammonia molecule is channeled to the active site of HisF. The protein is Imidazole glycerol phosphate synthase subunit HisH of Shewanella sediminis (strain HAW-EB3).